Consider the following 363-residue polypeptide: G kinase-anchoring protein 1 (363 aa).

Disordered regions lie at residues 22 to 124 and 143 to 185; these read DSSS…QLTS and EESK…KDFQ. A coiled-coil region spans residues 54–79; sequence NEKKKEKRRKKKEQQQSEANELRNLA. The span at 98-107 shows a compositional bias: basic and acidic residues; sequence HSTHNVPKEY. Residues 160 to 170 show a composition bias toward basic residues; sequence KVNKKDKRRNN. Coiled-coil stretches lie at residues 247–298 and 328–348; these read LKDG…QEGE and AALE…VKYQ.

It belongs to the GKAP1 family.

It is found in the golgi apparatus. Functionally, may play a role in the regulation of insulin-dependent IRS1 tyrosine phosphorylation in adipocytes. The polypeptide is G kinase-anchoring protein 1 (gkap1) (Xenopus tropicalis (Western clawed frog)).